The chain runs to 525 residues: ATP synthase subunit alpha (525 aa).

169 to 176 (GDRQTGKT) provides a ligand contact to ATP.

It belongs to the ATPase alpha/beta chains family. As to quaternary structure, F-type ATPases have 2 components, CF(1) - the catalytic core - and CF(0) - the membrane proton channel. CF(1) has five subunits: alpha(3), beta(3), gamma(1), delta(1), epsilon(1). CF(0) has three main subunits: a(1), b(2) and c(9-12). The alpha and beta chains form an alternating ring which encloses part of the gamma chain. CF(1) is attached to CF(0) by a central stalk formed by the gamma and epsilon chains, while a peripheral stalk is formed by the delta and b chains.

It localises to the cell membrane. The enzyme catalyses ATP + H2O + 4 H(+)(in) = ADP + phosphate + 5 H(+)(out). Functionally, produces ATP from ADP in the presence of a proton gradient across the membrane. The alpha chain is a regulatory subunit. In Mesoplasma florum (strain ATCC 33453 / NBRC 100688 / NCTC 11704 / L1) (Acholeplasma florum), this protein is ATP synthase subunit alpha.